Reading from the N-terminus, the 788-residue chain is Protein kintoun (788 aa).

3 disordered regions span residues 194 to 249 (LRKP…SEQD), 415 to 438 (NNSEGLTSESNLDTGAPYLPEISP), and 628 to 754 (HKEH…SSSV). Over residues 225–241 (GKEKKDQKRVIKEEHKQ) the composition is skewed to basic and acidic residues. Polar residues predominate over residues 417-427 (SEGLTSESNLD). 2 stretches are compositionally biased toward basic and acidic residues: residues 628 to 644 (HKEHCTDHSEHERDVGV) and 667 to 682 (ENTELDRDHTSERYEE). 2 stretches are compositionally biased toward polar residues: residues 685 to 701 (STSCTGESTSDQQQKDS) and 744 to 754 (NFDSRPASSSV).

This sequence belongs to the PIH1 family. Kintoun subfamily.

The protein localises to the cytoplasm. The protein resides in the dynein axonemal particle. Required for cytoplasmic pre-assembly of axonemal dyneins, thereby playing a central role in motility in cilia and flagella. Involved in pre-assembly of dynein arm complexes in the cytoplasm before intraflagellar transport loads them for the ciliary compartment. The chain is Protein kintoun from Xenopus laevis (African clawed frog).